Reading from the N-terminus, the 82-residue chain is uncharacterized protein (82 aa).

It belongs to the chlamydial CPn_0711/CT_665/TC_0036 family.

This is an uncharacterized protein from Chlamydia pneumoniae (Chlamydophila pneumoniae).